A 255-amino-acid chain; its full sequence is 5'-nucleotidase SurE (255 aa).

Residues D8, D9, S40, and N93 each contribute to the a divalent metal cation site.

Belongs to the SurE nucleotidase family. A divalent metal cation serves as cofactor.

The protein resides in the cytoplasm. It catalyses the reaction a ribonucleoside 5'-phosphate + H2O = a ribonucleoside + phosphate. Nucleotidase that shows phosphatase activity on nucleoside 5'-monophosphates. The polypeptide is 5'-nucleotidase SurE (Rhodopseudomonas palustris (strain ATCC BAA-98 / CGA009)).